The chain runs to 570 residues: Protein HEATR9 (570 aa).

This Macaca fascicularis (Crab-eating macaque) protein is Protein HEATR9 (HEATR9).